We begin with the raw amino-acid sequence, 334 residues long: o-succinylbenzoate synthase (334 aa).

The active-site Proton donor is Lys-107. Asp-135, Glu-162, and Asp-185 together coordinate Mg(2+). Lys-209 (proton acceptor) is an active-site residue.

This sequence belongs to the mandelate racemase/muconate lactonizing enzyme family. MenC type 1 subfamily. The cofactor is a divalent metal cation.

The catalysed reaction is (1R,6R)-6-hydroxy-2-succinyl-cyclohexa-2,4-diene-1-carboxylate = 2-succinylbenzoate + H2O. It participates in quinol/quinone metabolism; 1,4-dihydroxy-2-naphthoate biosynthesis; 1,4-dihydroxy-2-naphthoate from chorismate: step 4/7. Its pathway is quinol/quinone metabolism; menaquinone biosynthesis. Functionally, converts 2-succinyl-6-hydroxy-2,4-cyclohexadiene-1-carboxylate (SHCHC) to 2-succinylbenzoate (OSB). In Mycobacterium leprae (strain TN), this protein is o-succinylbenzoate synthase.